The following is a 418-amino-acid chain: Gamma-glutamyl phosphate reductase (418 aa).

It belongs to the gamma-glutamyl phosphate reductase family.

The protein resides in the cytoplasm. The catalysed reaction is L-glutamate 5-semialdehyde + phosphate + NADP(+) = L-glutamyl 5-phosphate + NADPH + H(+). Its pathway is amino-acid biosynthesis; L-proline biosynthesis; L-glutamate 5-semialdehyde from L-glutamate: step 2/2. Functionally, catalyzes the NADPH-dependent reduction of L-glutamate 5-phosphate into L-glutamate 5-semialdehyde and phosphate. The product spontaneously undergoes cyclization to form 1-pyrroline-5-carboxylate. This is Gamma-glutamyl phosphate reductase from Histophilus somni (strain 129Pt) (Haemophilus somnus).